The primary structure comprises 390 residues: tRNA (guanine(26)-N(2))-dimethyltransferase (390 aa).

One can recognise a Trm1 methyltransferase domain in the interval 4–378; that stretch reads HIIEEGLVKI…MPLDELKQLI (375 aa). S-adenosyl-L-methionine is bound by residues arginine 37, arginine 67, aspartate 85, aspartate 112, and alanine 113. Residues cysteine 245, cysteine 248, cysteine 265, and cysteine 268 each coordinate Zn(2+).

This sequence belongs to the class I-like SAM-binding methyltransferase superfamily. Trm1 family.

It carries out the reaction guanosine(26) in tRNA + 2 S-adenosyl-L-methionine = N(2)-dimethylguanosine(26) in tRNA + 2 S-adenosyl-L-homocysteine + 2 H(+). Its function is as follows. Dimethylates a single guanine residue at position 26 of a number of tRNAs using S-adenosyl-L-methionine as donor of the methyl groups. This is tRNA (guanine(26)-N(2))-dimethyltransferase from Methanosphaera stadtmanae (strain ATCC 43021 / DSM 3091 / JCM 11832 / MCB-3).